Consider the following 1392-residue polypeptide: ABC transporter G family member 42 (1392 aa).

The span at 1–18 (MTMSQTDGVEFASRNTNE) shows a compositional bias: polar residues. The tract at residues 1 to 26 (MTMSQTDGVEFASRNTNENGHDDDDQ) is disordered. The ABC transporter 1 domain occupies 139-413 (SKLSRFMCSN…FEDCGFKCPN (275 aa)). 173–180 (GPPSCGKT) serves as a coordination point for ATP. The ABC transmembrane type-2 1 domain occupies 491–703 (DMLKACSRRE…AEIGLTANEF (213 aa)). 6 consecutive transmembrane segments (helical) span residues 509–529 (FVYVFKSGLLIFIGFIAMTVY), 543–563 (YLMGSLFFSLFKLLADGLPEL), 596–616 (IPISFLESFLWTMLTYYVIGY), 627–647 (FLILFALHLSCISMFRAIAAV), 652–672 (VVATTVGSISIVLLSVFGGFI), and 739–759 (FGALIGFTLFFNTVFALALTF). The 246-residue stretch at 800 to 1045 (FTFQDVQYII…VIEYFMRIHG (246 aa)) folds into the ABC transporter 2 domain. 837–844 (GVSGAGKT) is an ATP binding site. The 215-residue stretch at 1117 to 1331 (EQFKACLWKQ…VLNGLLTSQY (215 aa)) folds into the ABC transmembrane type-2 2 domain. The next 7 membrane-spanning stretches (helical) occupy residues 1136-1156 (YNLTRIIFMSFTCMLCGILFW), 1175-1195 (MFTVVLFSGINNCSTVLFSVA), 1215-1237 (YSLAQVLVEIPYSLFQSIVYVII), 1255-1275 (FYSIFCTLLIFNYFGMLLVVV), 1281-1301 (IAFTLRSSFYAIVNLFAGYVM), 1309-1329 (WWIWMYYLSPTSWVLNGLLTS), and 1364-1384 (LVAVVLIAFPILLASLFAFFI).

Belongs to the ABC transporter superfamily. ABCG family. PDR (TC 3.A.1.205) subfamily. Confined to shoots.

It is found in the membrane. Its function is as follows. May be a general defense protein. The sequence is that of ABC transporter G family member 42 (ABCG42) from Arabidopsis thaliana (Mouse-ear cress).